The sequence spans 140 residues: Nucleoside diphosphate kinase (140 aa).

The ATP site is built by lysine 11, phenylalanine 59, arginine 87, threonine 93, arginine 104, and asparagine 114. Histidine 117 acts as the Pros-phosphohistidine intermediate in catalysis.

Belongs to the NDK family. Homotetramer. Mg(2+) is required as a cofactor.

It localises to the cytoplasm. It carries out the reaction a 2'-deoxyribonucleoside 5'-diphosphate + ATP = a 2'-deoxyribonucleoside 5'-triphosphate + ADP. The enzyme catalyses a ribonucleoside 5'-diphosphate + ATP = a ribonucleoside 5'-triphosphate + ADP. In terms of biological role, major role in the synthesis of nucleoside triphosphates other than ATP. The ATP gamma phosphate is transferred to the NDP beta phosphate via a ping-pong mechanism, using a phosphorylated active-site intermediate. The chain is Nucleoside diphosphate kinase from Rickettsia akari (strain Hartford).